The following is a 367-amino-acid chain: Chorismate synthase (367 aa).

Residue Arg48 coordinates NADP(+). FMN-binding positions include 125 to 127, Gly284, 299 to 303, and Arg325; these read RSS and KPTPS.

This sequence belongs to the chorismate synthase family. As to quaternary structure, homotetramer. FMNH2 is required as a cofactor.

The catalysed reaction is 5-O-(1-carboxyvinyl)-3-phosphoshikimate = chorismate + phosphate. It functions in the pathway metabolic intermediate biosynthesis; chorismate biosynthesis; chorismate from D-erythrose 4-phosphate and phosphoenolpyruvate: step 7/7. Catalyzes the anti-1,4-elimination of the C-3 phosphate and the C-6 proR hydrogen from 5-enolpyruvylshikimate-3-phosphate (EPSP) to yield chorismate, which is the branch point compound that serves as the starting substrate for the three terminal pathways of aromatic amino acid biosynthesis. This reaction introduces a second double bond into the aromatic ring system. The sequence is that of Chorismate synthase from Lachnoclostridium phytofermentans (strain ATCC 700394 / DSM 18823 / ISDg) (Clostridium phytofermentans).